Reading from the N-terminus, the 428-residue chain is Probable oxidoreductase OrdL (428 aa).

This Rhizobium meliloti (strain 1021) (Ensifer meliloti) protein is Probable oxidoreductase OrdL (ordL).